Here is a 451-residue protein sequence, read N- to C-terminus: Amino-acid acetyltransferase (451 aa).

The region spanning 305–451 is the N-acetyltransferase domain; it reads EYLREATLDD…RRSMVLMKKL (147 aa).

Belongs to the acetyltransferase family. ArgA subfamily.

It is found in the cytoplasm. The catalysed reaction is L-glutamate + acetyl-CoA = N-acetyl-L-glutamate + CoA + H(+). It participates in amino-acid biosynthesis; L-arginine biosynthesis; N(2)-acetyl-L-ornithine from L-glutamate: step 1/4. The polypeptide is Amino-acid acetyltransferase (argA) (Ralstonia nicotianae (strain ATCC BAA-1114 / GMI1000) (Ralstonia solanacearum)).